The chain runs to 307 residues: Plastid division protein PDV2 (307 aa).

Met1 carries the post-translational modification N-acetylmethionine. The Cytoplasmic segment spans residues 1–213; sequence MEDEEGIGLI…SGGSSHGVIR (213 aa). Positions 28–66 are disordered; the sequence is SSTTVSDNGDGNEDLSPGEGRKSEIIGNQDKDFDSISSE. The segment covering 46–61 has biased composition (basic and acidic residues); that stretch reads EGRKSEIIGNQDKDFD. Position 50 is a phosphoserine (Ser50). A coiled-coil region spans residues 76-103; sequence LLRIRDALEALESQLASLQNLRQRQQYE. Positions 174-206 are disordered; that stretch reads HLPSKKKSDANGFGSGHVRNEAEAKSPNGGSGG. Residues 214-234 form a helical membrane-spanning segment; that stretch reads FLGSVAKIVLPIIGVISLLSA. The Chloroplast intermembrane portion of the chain corresponds to 235 to 307; sequence SGYGPEMRKR…AKRDVTYGYG (73 aa). The tract at residues 235-307 is ARC6 binding; the sequence is SGYGPEMRKR…AKRDVTYGYG (73 aa).

Interacts (via C-terminus) with ARC6 (via C-terminus) in the chloroplast intermembrane space; this interaction induces ARC6 homodimerization and leads to the formation of a heterotetramer containing two ARC6 and two PDV2 subunits. Interacts with ARC5/DRP5B. As to expression, mostly expressed in young leaves.

The protein localises to the plastid. It is found in the chloroplast outer membrane. Component of the plastid division machinery consisting in a binary fission accomplished by the simultaneous constriction of the FtsZ ring on the stromal side of the inner envelope membrane, and the ARC5/DRP5B ring on the cytosolic side of the outer envelope membrane. Positive factor of chloroplast division required, with a dosage effect, to mediate the recruitment and dimerization of ARC5/DRP5B at the midplastid constriction site in the cytoplasm at plastid outer envelope membranes (OEMs). Prevents ARC5/DRP5B GTPase acrivity. Relays plastid division site position between stroma and outer surface via interactions with the cytoplasmic ARC5/DRP5B and the inner membrane ARC6 that recruits stromal FtsZ ring. Binding to phosphatidylinositol 4-phosphate (PI4P) modulates negatively chloroplast division. This is Plastid division protein PDV2 from Arabidopsis thaliana (Mouse-ear cress).